A 200-amino-acid polypeptide reads, in one-letter code: NADH-quinone oxidoreductase subunit C (200 aa).

This sequence belongs to the complex I 30 kDa subunit family. In terms of assembly, NDH-1 is composed of 14 different subunits. Subunits NuoB, C, D, E, F, and G constitute the peripheral sector of the complex.

It localises to the cell inner membrane. It catalyses the reaction a quinone + NADH + 5 H(+)(in) = a quinol + NAD(+) + 4 H(+)(out). Functionally, NDH-1 shuttles electrons from NADH, via FMN and iron-sulfur (Fe-S) centers, to quinones in the respiratory chain. The immediate electron acceptor for the enzyme in this species is believed to be ubiquinone. Couples the redox reaction to proton translocation (for every two electrons transferred, four hydrogen ions are translocated across the cytoplasmic membrane), and thus conserves the redox energy in a proton gradient. This Ralstonia nicotianae (strain ATCC BAA-1114 / GMI1000) (Ralstonia solanacearum) protein is NADH-quinone oxidoreductase subunit C.